The sequence spans 1622 residues: DNA (cytosine-5)-methyltransferase 1 (1622 aa).

The interval 1-145 (MPARTAPARV…RRSKSDSETM (145 aa)) is interaction with DNMT3A. Interaction with the PRC2/EED-EZH2 complex regions lie at residues 1-342 (MPAR…VERK) and 304-610 (TPEP…TVIN). S15 bears the Phosphoserine mark. The 94-residue stretch at 16–109 (PAGSLPDHVR…TQKANGCPAN (94 aa)) folds into the DMAP1-binding domain. K70 bears the N6,N6-dimethyllysine; by EHMT2 mark. The disordered stretch occupies residues 100 to 360 (TQKANGCPAN…IPKLNPPQCP (261 aa)). The segment covering 126–137 (PRSRPKPRGPRR) has biased composition (basic residues). S138 carries the phosphoserine modification. K139 carries the post-translational modification N6-methyllysine; by SETD7. S140 carries the phosphoserine; by PKB/AKT1 modification. The segment at 146 to 213 (IEASSSSVAT…TESRASRAGE (68 aa)) is interaction with DNMT3B. Residues S149 and S151 each carry the phosphoserine modification. The segment covering 149–166 (SSSSVATRRTTRQTTITS) has biased composition (low complexity). T163 is modified (phosphothreonine). K169 bears the N6-acetyllysine mark. Residues 173–200 (KRKPKEDSEKGNANESAAEERDQDKKRR) carry the Nuclear localization signal motif. Composition is skewed to basic and acidic residues over residues 176–197 (PKED…DQDK), 207–222 (RASR…ERVR), 237–269 (DDRR…THLD), and 276–300 (KDKR…KEEV). T304 is subject to Phosphothreonine. A DNA replication foci-targeting sequence region spans residues 327-556 (KPEPLSIPVQ…NVNRFTEDSL (230 aa)). Zn(2+)-binding residues include C359 and C362. K372 is modified (N6-acetyllysine). Residue S400 is modified to Phosphoserine. Residues C420 and H424 each coordinate Zn(2+). S515 and S555 each carry phosphoserine. The segment at 650–696 (NTMKRRRCGVCEVCQQPECGKCKACKDMVKFGGTGRSKQACLKRRCP) adopts a CXXC-type zinc-finger fold. Zn(2+) contacts are provided by C657, C660, C663, C668, C671, C674, C690, and C695. An autoinhibitory linker region spans residues 697 to 758 (NLAVKEADED…TYYWKVSIDE (62 aa)). The interval 702 to 733 (EADEDEEADDDIPELPSPKKLHQGKKKKQNKD) is disordered. A compositionally biased stretch (acidic residues) spans 703-714 (ADEDEEADDDIP). S718 is subject to Phosphoserine. Residues 720-731 (KKLHQGKKKKQN) are compositionally biased toward basic residues. S736 carries the post-translational modification Phosphoserine. The residue at position 753 (K753) is an N6-acetyllysine. The BAH 1 domain occupies 759–884 (ETLEVGDCVS…QDYARFESPP (126 aa)). S882 bears the Phosphoserine mark. 3 positions are modified to N6-acetyllysine: K895, K961, and K980. Residues 977–1105 (TYRKYSDYIK…SKTKSFEDPP (129 aa)) form the BAH 2 domain. A disordered region spans residues 1099-1138 (KSFEDPPNHARSPGNKGKGKGKGKGKGKPQVSEPKEPEAA). 6 tandem repeats follow at residues 1114–1115 (KG), 1116–1117 (KG), 1118–1119 (KG), 1120–1121 (KG), 1122–1123 (KG), and 1124–1125 (KG). Residues 1114-1127 (KGKGKGKGKGKGKP) are 7 X 2 AA tandem repeats of K-G. The span at 1115–1125 (GKGKGKGKGKG) shows a compositional bias: basic residues. N6-acetyllysine is present on residues K1116, K1118, K1120, K1122, K1124, and K1126. A 7; approximate repeat occupies 1126–1127 (KP). The interaction with the PRC2/EED-EZH2 complex stretch occupies residues 1126-1622 (KPQVSEPKEP…KGKEETTTED (497 aa)). The SAM-dependent MTase C5-type domain occupies 1144-1603 (LRTLDVFSGC…LEIKLCLLAS (460 aa)). The segment at 1144–1622 (LRTLDVFSGC…KGKEETTTED (479 aa)) is catalytic. Residues S1151, 1155–1156 (GL), 1173–1174 (EM), 1195–1196 (DC), and C1196 each bind S-adenosyl-L-methionine. The active site involves C1231. K1354 carries the N6-acetyllysine modification. Position 1436 is a phosphoserine (S1436). The S-adenosyl-L-methionine site is built by N1582 and V1584. K1613 participates in a covalent cross-link: Glycyl lysine isopeptide (Lys-Gly) (interchain with G-Cter in SUMO2).

The protein belongs to the class I-like SAM-binding methyltransferase superfamily. C5-methyltransferase family. In terms of assembly, homodimer. Forms a stable complex with E2F1, BB1 and HDAC1. Forms a complex with DMAP1 and HDAC2, with direct interaction. Interacts with the PRC2/EED-EZH2 complex. Probably part of a corepressor complex containing ZNF304, TRIM28, SETDB1 and DNMT1. Interacts with UHRF1; promoting its recruitment to hemimethylated DNA. Interacts with USP7, promoting its deubiquitination. Interacts with PCNA. Interacts with MBD2 and MBD3. Interacts with DNMT3A and DNMT3B. Interacts with UBC9. Interacts with CSNK1D. Interacts with HDAC1. Interacts with BAZ2A/TIP5. Interacts with SIRT7. Interacts with ZNF263; recruited to the SIX3 promoter along with other proteins involved in chromatin modification and transcriptional corepression where it contributes to transcriptional repression. Interacts with L3MBTL3 and DCAF5; the interaction requires DNMT1 methylation at Lys-139 and is necessary to target DNMT1 for ubiquitination by the CRL4-DCAF5 E3 ubiquitin ligase complex and proteasomal degradation. Interacts with PHF20L1; the interaction requires DNMT1 methylation at Lys-139 and protects DNMT1 from ubiquitination and proteasomal degradation. Post-translationally, sumoylated; sumoylation increases activity. In terms of processing, acetylation on multiple lysines, mainly by KAT2B/PCAF, regulates cell cycle G(2)/M transition. Deacetylation of Lys-1116 and Lys-1354 by SIRT1 increases methyltransferase activity. Phosphorylation of Ser-151 by CDKs is important for enzymatic activity and protein stability. Phosphorylation of Ser-140 by AKT1 prevents methylation by SETD7 thereby increasing DNMT1 stability. Post-translationally, methylation at Lys-139 by SETD7 is necessary for the regulation of DNMT1 proteasomal degradation. In terms of processing, ubiquitinated by UHRF1; interaction with USP7 counteracts ubiquitination by UHRF1 by promoting deubiquitination and preventing degradation by the proteasome. Isoforms 0 and 8 are highly expressed in placenta, brain, lung, spleen, kidney, heart, and at much lower levels in liver. Isoform 1 is expressed in cerebellum, isoform 2 in muscle and testis, isoform 3 in lung, isoform 4 in spleen and brain, and isoform 5 in brain.

It is found in the nucleus. It carries out the reaction a 2'-deoxycytidine in DNA + S-adenosyl-L-methionine = a 5-methyl-2'-deoxycytidine in DNA + S-adenosyl-L-homocysteine + H(+). Methylates CpG residues. Preferentially methylates hemimethylated DNA. Associates with DNA replication sites in S phase maintaining the methylation pattern in the newly synthesized strand, that is essential for epigenetic inheritance. Associates with chromatin during G2 and M phases to maintain DNA methylation independently of replication. It is responsible for maintaining methylation patterns established in development. DNA methylation is coordinated with methylation of histones. Mediates transcriptional repression by direct binding to HDAC2. In association with DNMT3B and via the recruitment of CTCFL/BORIS, involved in activation of BAG1 gene expression by modulating dimethylation of promoter histone H3 at H3K4 and H3K9. Probably forms a corepressor complex required for activated KRAS-mediated promoter hypermethylation and transcriptional silencing of tumor suppressor genes (TSGs) or other tumor-related genes in colorectal cancer (CRC) cells. Also required to maintain a transcriptionally repressive state of genes in undifferentiated embryonic stem cells (ESCs). Associates at promoter regions of tumor suppressor genes (TSGs) leading to their gene silencing. Promotes tumor growth. This chain is DNA (cytosine-5)-methyltransferase 1 (Dnmt1), found in Rattus norvegicus (Rat).